Here is an 82-residue protein sequence, read N- to C-terminus: Translational regulator CsrA (82 aa).

Belongs to the CsrA/RsmA family. In terms of assembly, homodimer; the beta-strands of each monomer intercalate to form a hydrophobic core, while the alpha-helices form wings that extend away from the core.

It localises to the cytoplasm. Functionally, a translational regulator that binds mRNA to regulate translation initiation and/or mRNA stability. Usually binds in the 5'-UTR at or near the Shine-Dalgarno sequence preventing ribosome-binding, thus repressing translation. Its main target seems to be the major flagellin gene, while its function is anatagonized by FliW. The sequence is that of Translational regulator CsrA from Geobacillus sp. (strain WCH70).